Reading from the N-terminus, the 173-residue chain is MFKLDLKRFIRDIPDFPQKGIVFRDITPLLRNQEAFKEAIDRMCELVFDREFDLVVAPEARGFILGAAMAYKLGKGFVPVRKPGKLPYKTVYEEYQLEYGTEQLHIHEDAIEKGQKVLIVDDVLATGGTAEALIRLVKKLGGEVVSLAFLVELSYLEPRKRLEGYDVKTLIVY.

This sequence belongs to the purine/pyrimidine phosphoribosyltransferase family. Homodimer.

Its subcellular location is the cytoplasm. The catalysed reaction is AMP + diphosphate = 5-phospho-alpha-D-ribose 1-diphosphate + adenine. It participates in purine metabolism; AMP biosynthesis via salvage pathway; AMP from adenine: step 1/1. In terms of biological role, catalyzes a salvage reaction resulting in the formation of AMP, that is energically less costly than de novo synthesis. In Thermotoga maritima (strain ATCC 43589 / DSM 3109 / JCM 10099 / NBRC 100826 / MSB8), this protein is Adenine phosphoribosyltransferase.